The following is a 561-amino-acid chain: Putative periplasmic trehalase (561 aa).

Residues Met1 to Ala30 form the signal peptide. Residues Arg148, Trp155 to Asp156, Asn192, Arg201 to Gln203, Arg273 to Glu275, and Gly306 contribute to the substrate site. Active-site proton donor/acceptor residues include Asp308 and Glu492. A substrate-binding site is contributed by Glu507. Residues Cys535–Pro561 form a disordered region.

This sequence belongs to the glycosyl hydrolase 37 family. In terms of assembly, monomer.

The protein localises to the periplasm. The catalysed reaction is alpha,alpha-trehalose + H2O = alpha-D-glucose + beta-D-glucose. Functionally, provides the cells with the ability to utilize trehalose at high osmolarity by splitting it into glucose molecules that can subsequently be taken up by the phosphotransferase-mediated uptake system. This Escherichia coli O157:H7 protein is Putative periplasmic trehalase.